We begin with the raw amino-acid sequence, 200 residues long: Vacuolar iron transporter homolog 1 (200 aa).

Topologically, residues 1-34 (MESHNVSNSLNLDMEMDQEKAFDYSKRAQWLRAA) are cytoplasmic. The chain crosses the membrane as a helical span at residues 35–55 (VLGANDGLVSTASLMMGVGAV). Residues 56–62 (KQDVKVM) lie on the Vacuolar side of the membrane. Residues 63–83 (ILSGFAGLVAGACSMAIGEFV) form a helical membrane-spanning segment. Residues 84-116 (SVYSQYDIEVAQMKRENGGQVEKEKLPSPMQAA) lie on the Cytoplasmic side of the membrane. A helical membrane pass occupies residues 117 to 137 (AASALAFSLGAIVPLMAAAFV). Topologically, residues 138–143 (KDYHVR) are vacuolar. Residues 144 to 164 (IGAIVAAVTLALVMFGWLGAV) form a helical membrane-spanning segment. Residues 165 to 176 (LGKAPVFKSSAR) lie on the Cytoplasmic side of the membrane. The chain crosses the membrane as a helical span at residues 177-197 (VLIGGWLAMAVTFGLTKLIGT). Residues 198–200 (HSL) are Vacuolar-facing.

Belongs to the CCC1 family. Expressed in the vascular bundles of the shoot and the stele of the root. Expressed in inflorescences and at lower levels in leaves.

It is found in the vacuole membrane. The catalysed reaction is Fe(2+)(in) = Fe(2+)(out). In terms of biological role, vacuolar iron transporter involved in the transfer of iron ions from the cytosol to the vacuole for intracellular iron storage. Involved in regulation of cellular iron homeostasis. Vacuolar iron storage is required for seed embryo and seedling development. This Arabidopsis thaliana (Mouse-ear cress) protein is Vacuolar iron transporter homolog 1.